Consider the following 358-residue polypeptide: Protein-glutamate methylesterase/protein-glutamine glutaminase 2 (358 aa).

Residues 8–125 form the Response regulatory domain; the sequence is RVLIVDDSAV…ARGLEGYAEE (118 aa). Position 59 is a 4-aspartylphosphate (D59). Residues 157–352 enclose the CheB-type methylesterase domain; sequence PMPGSALRFR…LDRVAERLLA (196 aa). Catalysis depends on residues S177, H203, and D299.

The protein belongs to the CheB family. In terms of processing, phosphorylated by CheA. Phosphorylation of the N-terminal regulatory domain activates the methylesterase activity.

It is found in the cytoplasm. It catalyses the reaction [protein]-L-glutamate 5-O-methyl ester + H2O = L-glutamyl-[protein] + methanol + H(+). The catalysed reaction is L-glutaminyl-[protein] + H2O = L-glutamyl-[protein] + NH4(+). In terms of biological role, involved in chemotaxis. Part of a chemotaxis signal transduction system that modulates chemotaxis in response to various stimuli. Catalyzes the demethylation of specific methylglutamate residues introduced into the chemoreceptors (methyl-accepting chemotaxis proteins or MCP) by CheR. Also mediates the irreversible deamidation of specific glutamine residues to glutamic acid. The chain is Protein-glutamate methylesterase/protein-glutamine glutaminase 2 from Xanthomonas oryzae pv. oryzae (strain MAFF 311018).